A 196-amino-acid chain; its full sequence is ATP-dependent Clp protease proteolytic subunit (196 aa).

Serine 96 functions as the Nucleophile in the catalytic mechanism. The active site involves histidine 121.

It belongs to the peptidase S14 family. Fourteen ClpP subunits assemble into 2 heptameric rings which stack back to back to give a disk-like structure with a central cavity, resembling the structure of eukaryotic proteasomes.

Its subcellular location is the cytoplasm. The catalysed reaction is Hydrolysis of proteins to small peptides in the presence of ATP and magnesium. alpha-casein is the usual test substrate. In the absence of ATP, only oligopeptides shorter than five residues are hydrolyzed (such as succinyl-Leu-Tyr-|-NHMec, and Leu-Tyr-Leu-|-Tyr-Trp, in which cleavage of the -Tyr-|-Leu- and -Tyr-|-Trp bonds also occurs).. Functionally, cleaves peptides in various proteins in a process that requires ATP hydrolysis. Has a chymotrypsin-like activity. Plays a major role in the degradation of misfolded proteins. In Streptococcus suis (strain 98HAH33), this protein is ATP-dependent Clp protease proteolytic subunit.